Here is a 727-residue protein sequence, read N- to C-terminus: Protein EXECUTER 1, chloroplastic (727 aa).

Disordered stretches follow at residues 1–51 (MAAA…SRLF), 65–102 (LAGA…AGSG), 340–381 (ISSS…LPSD), and 413–455 (DEDD…SGDE). Residues 1-83 (MAAAVSTAPR…PRRRVSSVVR (83 aa)) constitute a chloroplast transit peptide. Low complexity-rich tracts occupy residues 19 to 33 (SSSC…ASMS) and 42 to 51 (PSSGSGSRLF). Over residues 413–441 (DEDDENDNPEDEIESSEDIGDGDNVEEAE) the composition is skewed to acidic residues.

It is found in the plastid. Its subcellular location is the chloroplast. Together with EX2, enables higher plants to perceive singlet oxygen as a stress signal in plastid that activates a genetically determined nuclear stress response program which triggers a programmed cell death (PCD). This transfer of singlet oxygen-induced stress-related signals from the plastid to the nucleus that triggers genetically controlled PCD pathway is unique to photosynthetic eukaryotes and operates under mild stress conditions, impeding photosystem II (PSII) without causing photooxidative damage of the plant. The polypeptide is Protein EXECUTER 1, chloroplastic (Oryza sativa subsp. japonica (Rice)).